Consider the following 137-residue polypeptide: Histone H2B (137 aa).

The span at 1-10 (MAPKAADKKP) shows a compositional bias: basic and acidic residues. The interval 1 to 45 (MAPKAADKKPASKAPATASKAPEKKDAGKKTAPSGDKKKRTKARK) is disordered. An N6-acetyllysine; alternate mark is found at lysine 8 and lysine 9. Glycyl lysine isopeptide (Lys-Gly) (interchain with G-Cter in SUMO); alternate cross-links involve residues lysine 8 and lysine 9. Serine 12 bears the Phosphoserine mark. Lysine 13 carries the N6-acetyllysine modification. The residue at position 24 (lysine 24) is an N6-acetyllysine; alternate. Residue lysine 24 forms a Glycyl lysine isopeptide (Lys-Gly) (interchain with G-Cter in SUMO); alternate linkage. Residue lysine 25 forms a Glycyl lysine isopeptide (Lys-Gly) (interchain with G-Cter in SUMO) linkage. Lysine 131 participates in a covalent cross-link: Glycyl lysine isopeptide (Lys-Gly) (interchain with G-Cter in ubiquitin).

Belongs to the histone H2B family. As to quaternary structure, the nucleosome is a histone octamer containing two molecules each of H2A, H2B, H3 and H4 assembled in one H3-H4 heterotetramer and two H2A-H2B heterodimers. The octamer wraps approximately 147 bp of DNA. Monoubiquitinated by the UBC2-BRE1 complex to form H2BK123ub1. H2BK123ub1 gives a specific tag for epigenetic transcriptional activation and is also prerequisite for H3K4me and H3K79me formation. H2BK123ub1 also modulates the formation of double-strand breaks during meiosis and is a prerequisite for DNA-damage checkpoint activation. Post-translationally, phosphorylated to form H2BS10ph during progression through meiotic prophase. May be correlated with chromosome condensation. In terms of processing, acetylated by GCN5 to form H2BK11ac and H2BK16ac. H2BK16ac can also be formed by ESA1. Acetylation of N-terminal lysines and particularly formation of H2BK11acK16ac has a positive effect on transcription. Sumoylation to form H2BK6su or H2BK7su, and probably also H2BK16su or H2BK17su, occurs preferentially near the telomeres and represses gene transcription.

The protein localises to the nucleus. It is found in the chromosome. In terms of biological role, core component of nucleosome. Nucleosomes wrap and compact DNA into chromatin, limiting DNA accessibility to the cellular machineries which require DNA as a template. Histones thereby play a central role in transcription regulation, DNA repair, DNA replication and chromosomal stability. DNA accessibility is regulated via a complex set of post-translational modifications of histones, also called histone code, and nucleosome remodeling. This chain is Histone H2B (HTB1), found in Chaetomium globosum (strain ATCC 6205 / CBS 148.51 / DSM 1962 / NBRC 6347 / NRRL 1970) (Soil fungus).